The chain runs to 300 residues: Acetylglutamate kinase (300 aa).

Substrate contacts are provided by residues 73 to 74, Arg95, and Asn197; that span reads GG.

Belongs to the acetylglutamate kinase family. ArgB subfamily.

The protein resides in the cytoplasm. It catalyses the reaction N-acetyl-L-glutamate + ATP = N-acetyl-L-glutamyl 5-phosphate + ADP. It participates in amino-acid biosynthesis; L-arginine biosynthesis; N(2)-acetyl-L-ornithine from L-glutamate: step 2/4. Catalyzes the ATP-dependent phosphorylation of N-acetyl-L-glutamate. The sequence is that of Acetylglutamate kinase from Bordetella parapertussis (strain 12822 / ATCC BAA-587 / NCTC 13253).